The chain runs to 488 residues: Transmembrane protein 39A (488 aa).

Residues asparagine 31 and asparagine 39 are each glycosylated (N-linked (GlcNAc...) asparagine). The next 3 helical transmembrane spans lie at 72 to 92 (GLLFEFLFFIYLLVALFIQYI), 110 to 130 (TSLNFHLIDYHLAAFITVMLA), and 155 to 175 (LITARLVLLTLCGWVFCWTLV). Residue asparagine 180 is glycosylated (N-linked (GlcNAc...) asparagine). A run of 5 helical transmembrane segments spans residues 182 to 202 (SVLNLLFLGYPFGVYVPLCCF), 287 to 307 (EVLFNSLFSAYYVAFLPLCFV), 319 to 339 (CEHLIMVWINAFVMLSTQLLP), 420 to 440 (LLNLLLIIEGSLVLYQLYSLL), and 446 to 466 (NHTLSIALILFCNYYVLFKLL).

It belongs to the TMEM39 family.

It is found in the endoplasmic reticulum membrane. Functionally, regulates autophagy by controlling the spatial distribution and levels of the intracellular phosphatidylinositol 4-phosphate (PtdIns(4)P) pools. Modulates (PtdIns(4)P) levels by regulating the ER-to-Golgi trafficking of the phosphatidylinositide phosphatase SACM1L. The chain is Transmembrane protein 39A (tmem39a) from Xenopus tropicalis (Western clawed frog).